A 233-amino-acid polypeptide reads, in one-letter code: Pyridoxine 5'-phosphate synthase (233 aa).

Residue Asn6 coordinates 3-amino-2-oxopropyl phosphate. 8–9 contacts 1-deoxy-D-xylulose 5-phosphate; that stretch reads DH. Residue Arg17 participates in 3-amino-2-oxopropyl phosphate binding. Catalysis depends on His42, which acts as the Proton acceptor. Residues Arg44 and His49 each coordinate 1-deoxy-D-xylulose 5-phosphate. The active-site Proton acceptor is the Glu69. A 1-deoxy-D-xylulose 5-phosphate-binding site is contributed by Thr99. The Proton donor role is filled by His186. 3-amino-2-oxopropyl phosphate contacts are provided by residues Gly187 and 208-209; that span reads GH.

It belongs to the PNP synthase family. In terms of assembly, homooctamer; tetramer of dimers.

It localises to the cytoplasm. It catalyses the reaction 3-amino-2-oxopropyl phosphate + 1-deoxy-D-xylulose 5-phosphate = pyridoxine 5'-phosphate + phosphate + 2 H2O + H(+). It functions in the pathway cofactor biosynthesis; pyridoxine 5'-phosphate biosynthesis; pyridoxine 5'-phosphate from D-erythrose 4-phosphate: step 5/5. Its function is as follows. Catalyzes the complicated ring closure reaction between the two acyclic compounds 1-deoxy-D-xylulose-5-phosphate (DXP) and 3-amino-2-oxopropyl phosphate (1-amino-acetone-3-phosphate or AAP) to form pyridoxine 5'-phosphate (PNP) and inorganic phosphate. This is Pyridoxine 5'-phosphate synthase from Anaplasma phagocytophilum (strain HZ).